The primary structure comprises 626 residues: Leucine-rich repeat and fibronectin type-III domain-containing protein 3 (626 aa).

Positions 1–16 (MAVLPLLLCLLPLAPA) are cleaved as a signal peptide. At 17–539 (SSPPQPATSS…PHAPFLGGTM (523 aa)) the chain is on the extracellular side. Residues 19-59 (PPQPATSSPCPRRCRCQTQSLPLSVLCPGAGLLFVPPSLDR) form the LRRNT domain. LRR repeat units follow at residues 84-105 (GLLH…AFAD), 108-129 (ALRA…QLRG), 132-153 (NLRH…ALDD), 157-178 (TLED…ALGR), 181-202 (NVNT…AFSR), and 205-226 (KLAR…PLFS). An LRRCT domain is found at 249 to 295 (NPLHCNCELVWLRRLAREDDLEACASPPALGGRYFWAVGEEEFVCEP). The Ig-like domain occupies 295 to 382 (PPVVTHRSPP…GEATAAVELT (88 aa)). One can recognise a Fibronectin type-III 1 domain in the interval 308 to 395 (PAGRPAALRC…PPPPQLANST (88 aa)). A disulfide bridge connects residues Cys-317 and Cys-366. N-linked (GlcNAc...) asparagine glycosylation is found at Asn-339, Asn-348, and Asn-393. Residues 382 to 423 (TVGPPPPPQLANSTSCDPPRDGEPDALTPPSAASASAKVADT) form a disordered region. Residues 406–423 (DALTPPSAASASAKVADT) are compositionally biased toward low complexity. The 99-residue stretch at 425 to 523 (APTDRGVQVT…GCARFSTEPA (99 aa)) folds into the Fibronectin type-III 2 domain. Residues 540–560 (IIALGGVIVASVLVFIFVLLL) form a helical membrane-spanning segment. Over 561-626 (RYKVHGVQPP…WGPSHEPAGP (66 aa)) the chain is Cytoplasmic.

The protein belongs to the LRFN family. In terms of assembly, can form heteromeric complexes with LRFN1, LRFN2, LRFN4 and LRFN5. Able to form homomeric complexes across cell junctions, between adjacent cells. Does not interact with DLG4. N-glycosylated. In terms of tissue distribution, expressed in brain. Within brain, expressed in hippocampus, cerebellum, olfactory bulb and forebrain (at protein level).

It is found in the cell membrane. Its subcellular location is the cell projection. It localises to the axon. The protein localises to the dendrite. The protein resides in the synapse. It is found in the presynaptic cell membrane. Its subcellular location is the postsynaptic cell membrane. Functionally, cell adhesion molecule that mediates homophilic cell-cell adhesion in a Ca(2+)-independent manner. Promotes neurite outgrowth in hippocampal neurons. In Rattus norvegicus (Rat), this protein is Leucine-rich repeat and fibronectin type-III domain-containing protein 3.